The chain runs to 990 residues: Protein argonaute 7 (990 aa).

Positions 1-13 (MEEKTHHHHHSTN) are enriched in basic residues. The segment at 1–25 (MEEKTHHHHHSTNKHIPSSKSRTPL) is disordered. The region spanning 379 to 484 (EFLTDLPRNK…LPMELCMICE (106 aa)) is the PAZ domain. The 302-residue stretch at 649-950 (LIICVMEKKH…AAYRGRLYIE (302 aa)) folds into the Piwi domain. A disordered region spans residues 953–973 (SESNGGSMNPSSVSRVGPPKT). A compositionally biased stretch (polar residues) spans 954 to 966 (ESNGGSMNPSSVS).

It belongs to the argonaute family. Ago subfamily. As to expression, expressed in leaves and floral buds, and at low levels in roots.

Involved in RNA-mediated post-transcriptional gene silencing (PTGS). Main component of the RNA-induced silencing complex (RISC) that binds to a short guide RNA such as a microRNA (miRNA) or small interfering RNA (siRNA). RISC uses the mature miRNA or siRNA as a guide for slicer-directed cleavage of homologous mRNAs to repress gene expression. Required for the processing of 21 nucleotide trans-acting siRNAs (ta-siRNAs) derived from TAS3a transcripts. Associates preferentially with the microRNA (miRNA) miR390 which guides the cleavage of TAS3 precursor RNA. Seems to act as miR390 specific slicer. Associates mainly with small RNAs of 21 nucleotide in length and with a 5' terminal adenosine. Acts in the RDR6/SGS3/DCL4/AGO7 trans-acting siRNA pathway involved in leaf developmental timing. Does not seem to act on leaf polarity. Required for the production of the 30-40nt bacterial-induced long siRNAs (lsiRNA). Involved in antiviral RNA silencing by contributing to efficient viral RNAs clearance. Targets less structured viral RNAs than AGO1 which is capable of targeting RNAs with more compact structures. This chain is Protein argonaute 7 (AGO7), found in Arabidopsis thaliana (Mouse-ear cress).